The following is a 118-amino-acid chain: Cycloviolacin-O11 (118 aa).

Residues 1–22 (MEMKNMVVGLFLIAAFALPALA) form the signal peptide. The propeptide occupies 23-84 (TSFEKDFITH…THSNSINALG (62 aa)). The segment at residues 85 to 115 (GTLPCGESCVWIPCISAVVGCSCKSKVCYKN) is a cross-link (cyclopeptide (Gly-Asn)). 3 disulfide bridges follow: Cys-89–Cys-105, Cys-93–Cys-107, and Cys-98–Cys-112. Residues 116-118 (SLA) constitute a propeptide that is removed on maturation.

Post-translationally, cycloviolacin-O11 is a cyclic peptide. In terms of tissue distribution, expressed in leaves, petals and petioles but not in roots and runners (at protein level).

Functionally, probably participates in a plant defense mechanism. This Viola odorata (Sweet violet) protein is Cycloviolacin-O11 (Voc2).